We begin with the raw amino-acid sequence, 355 residues long: dTDP-glucose 4,6-dehydratase (355 aa).

NAD(+) is bound by residues F12–I13, D33–T36, D59–I60, L81–S85, and T100. Residue S85 participates in substrate binding. Residue T134 coordinates substrate. D135 serves as the catalytic Proton donor. Residues E136 and Y160 each act as proton acceptor in the active site. Y160–K164 is an NAD(+) binding site. Position 189 (N189) interacts with substrate. N190 is an NAD(+) binding site. Substrate contacts are provided by residues K199 to L200, P215 to Y217, R224, N259, and D293 to H297.

This sequence belongs to the NAD(P)-dependent epimerase/dehydratase family. dTDP-glucose dehydratase subfamily. As to quaternary structure, homodimer. The cofactor is NAD(+).

It catalyses the reaction dTDP-alpha-D-glucose = dTDP-4-dehydro-6-deoxy-alpha-D-glucose + H2O. Its pathway is carbohydrate biosynthesis; dTDP-L-rhamnose biosynthesis. It participates in bacterial outer membrane biogenesis; LPS O-antigen biosynthesis. Functionally, catalyzes the dehydration of dTDP-D-glucose to form dTDP-6-deoxy-D-xylo-4-hexulose via a three-step process involving oxidation, dehydration and reduction. The polypeptide is dTDP-glucose 4,6-dehydratase (rfbB1) (Neisseria meningitidis serogroup B (strain ATCC BAA-335 / MC58)).